Here is a 398-residue protein sequence, read N- to C-terminus: Probable sugar efflux transporter (398 aa).

12 consecutive transmembrane segments (helical) span residues 15–35, 50–70, 81–101, 103–123, 136–156, 169–189, 209–229, 246–266, 275–295, 301–321, 333–353, and 364–384; these read VVTLAIAAFIFNTTEFVPVGL, VGIMLTIYAWVVALMSLPFML, LIGLFVLFIASHVLSFLAWNF, VLVISRIGIAFAHAIFWSITA, AQALSLLATGTALAMVLGLPI, TFFAIGLGALITLLCLIKLLP, PALMSIYLLTVVVVTAHYTAY, FATVLLLILGGAGIIGSVLFG, LLVSSAIGLLLACLLLLMPAA, LAILSIFWGVAIMIIGLGMQV, VAMSLFSGIFNIGIGAGALVG, and AIGYLGAIPALAALIWSILIF.

This sequence belongs to the major facilitator superfamily. SotB (TC 2.A.1.2) family.

The protein localises to the cell inner membrane. Involved in the efflux of sugars. The physiological role may be the reduction of the intracellular concentration of toxic sugars or sugar metabolites. The sequence is that of Probable sugar efflux transporter from Enterobacter sp. (strain 638).